We begin with the raw amino-acid sequence, 483 residues long: MLTLDTLNVMLAVSEEGLIEEMIIALLASPQLAVFFEKFPRLKAAITDDVPRWREALRSRLKDARVPPELTEEVMCYQQSQLLSTPQFIVQLPQILDLLHRLNSPWAEQARQLVDANSTITSALHTLFLQRWRLSLIVQATTLNQQLLEEEREQLLSEVQERMTLSGQLEPILADNNTAAGRLWDMSAGQLKRGDYQLIVKYGEFLNEQPELKRLAEQLGRSREAKSIPRNDAQMETFRTMVREPATVPEQVDGLQQSDDILRLLPPELATLGITELEYEFYRRLVEKQLLTYRLHGESWREKVIERPVVHKDYDEQPRGPFIVCVDTSGSMGGFNEQCAKAFCLALMRIALAENRRCYIMLFSTEIVRYELSGPQGIEQAIRFLSQQFRGGTDLASCFRAIMERLQSREWFDADAVVISDFIAQRLPDDVTSKVKELQRVHQHRFHAVAMSAHGKPGIMRIFDHIWRFDTGMRSRLLRRWRR.

It belongs to the ViaA family. In terms of assembly, homodimer. Interacts with RavA.

The protein resides in the cytoplasm. Its function is as follows. Component of the RavA-ViaA chaperone complex, which may act on the membrane to optimize the function of some of the respiratory chains. ViaA stimulates the ATPase activity of RavA. The sequence is that of Regulatory protein ViaA from Shigella sonnei (strain Ss046).